The sequence spans 338 residues: Aspartate carbamoyltransferase catalytic subunit (338 aa).

2 residues coordinate carbamoyl phosphate: Arg-71 and Thr-72. Lys-99 serves as a coordination point for L-aspartate. Arg-121, His-151, and Gln-154 together coordinate carbamoyl phosphate. Positions 184 and 239 each coordinate L-aspartate. Positions 280 and 281 each coordinate carbamoyl phosphate.

It belongs to the aspartate/ornithine carbamoyltransferase superfamily. ATCase family. Heterododecamer (2C3:3R2) of six catalytic PyrB chains organized as two trimers (C3), and six regulatory PyrI chains organized as three dimers (R2).

It carries out the reaction carbamoyl phosphate + L-aspartate = N-carbamoyl-L-aspartate + phosphate + H(+). The protein operates within pyrimidine metabolism; UMP biosynthesis via de novo pathway; (S)-dihydroorotate from bicarbonate: step 2/3. Functionally, catalyzes the condensation of carbamoyl phosphate and aspartate to form carbamoyl aspartate and inorganic phosphate, the committed step in the de novo pyrimidine nucleotide biosynthesis pathway. The polypeptide is Aspartate carbamoyltransferase catalytic subunit (Stutzerimonas stutzeri (strain A1501) (Pseudomonas stutzeri)).